The primary structure comprises 75 residues: MASQDDPVQREIHQDWANREYIEVITSSIKKIADFLNSFDMSCRSRLATLNEKLTALERRIEYIEARVTKGETLT.

Residues 41–72 adopt a coiled-coil conformation; the sequence is MSCRSRLATLNEKLTALERRIEYIEARVTKGE.

This sequence belongs to the BRK1 family.

The protein localises to the cytoplasm. It localises to the cytoskeleton. Involved in regulation of actin and microtubule organization. Part of a WAVE complex that activates the Arp2/3 complex. The protein is Probable protein BRICK1-A (brk1-a) of Xenopus laevis (African clawed frog).